Here is a 130-residue protein sequence, read N- to C-terminus: Small ribosomal subunit protein uS9 (130 aa).

This sequence belongs to the universal ribosomal protein uS9 family.

This is Small ribosomal subunit protein uS9 from Albidiferax ferrireducens (strain ATCC BAA-621 / DSM 15236 / T118) (Rhodoferax ferrireducens).